Reading from the N-terminus, the 543-residue chain is DM7 family protein GG19680 (543 aa).

A compositionally biased stretch (basic and acidic residues) spans 415 to 430; it reads GETQEMDEAHPTKEES. The tract at residues 415 to 443 is disordered; it reads GETQEMDEAHPTKEESKSEEEGEVQSGSQ.

Belongs to the DM7 family.

This is DM7 family protein GG19680 from Drosophila erecta (Fruit fly).